Reading from the N-terminus, the 2009-residue chain is ADP-ribosylation factor guanine nucleotide-exchange factor SEC7 (2009 aa).

The disordered stretch occupies residues 1–220 (MSEQNSVVNA…ISLSSNGSNT (220 aa)). Polar residues predominate over residues 17–33 (ISSNVETASSVNPSVKP). Basic and acidic residues predominate over residues 37 to 53 (IKEEAKETNGEDQKCKG). Residues 91–118 (EGEDGDEDEDEDEDEDEDNGDEDDEDVD) are compositionally biased toward acidic residues. Low complexity predominate over residues 134 to 143 (SVSGESTESS). Over residues 144–154 (SGEDEESDESD) the composition is skewed to acidic residues. Low complexity predominate over residues 155 to 165 (GNTSNSSSGDE). Residues 166 to 184 (SGSEEEEEEEEEEEEEENA) show a composition bias toward acidic residues. Residues 194–209 (SVPTNDSTAPRSTHTR) are compositionally biased toward polar residues. Residues 210–220 (NISLSSNGSNT) are compositionally biased toward low complexity. 2 positions are modified to phosphoserine: Ser-212 and Ser-215. Residue Thr-334 is modified to Phosphothreonine. Phosphoserine occurs at positions 447, 452, and 455. The short motif at 653-657 (NYDCN) is the HUS box element. Residues 771-788 (SSARQESRSSLSNDVRSS) show a composition bias toward low complexity. The interval 771–814 (SSARQESRSSLSNDVRSSIMTSNDDFKPTYEDEESRSLSSQNID) is disordered. Residue Lys-797 forms a Glycyl lysine isopeptide (Lys-Gly) (interchain with G-Cter in ubiquitin) linkage. At Ser-807 the chain carries Phosphoserine. The SEC7 domain maps to 824–1010 (LKLRKTALSE…LFNEIANNEI (187 aa)). Position 940 (Asp-940) interacts with Mg(2+). An HDS1 domain region spans residues 1017–1220 (HQAMLSGDTN…QARVANPRVS (204 aa)). Position 1226 is a phosphoserine (Ser-1226). Thr-1240 bears the Phosphothreonine mark. Residues 1708–1723 (GRKSSVSHHQTTNDTS) show a composition bias toward polar residues. Residues 1708–1803 (GRKSSVSHHQ…KKTKHMKRNE (96 aa)) form a disordered region. The segment covering 1724-1751 (QHSDDDSNDRRENDSNISETVERAHQEE) has biased composition (basic and acidic residues). Ser-1741 and Ser-1752 each carry phosphoserine. Residues 1764–1777 (LNGQTKLNNGNSVP) show a composition bias toward polar residues. Positions 1836–1883 (FENEDFAHCIPYKEAIRITRLLEKSYEFSRDFNEDYGLRTRLVEARVV) are C2 domain-interacting region (CIR).

Interacts with ARF1. Interacts (via C-terminus) with RSP5 ubiquitin ligase.

It is found in the cytoplasm. The protein localises to the golgi apparatus. It localises to the trans-Golgi network. Its subcellular location is the cytoplasmic vesicle. The protein resides in the COPI-coated vesicle membrane. It is found in the COPII-coated vesicle membrane. In terms of biological role, guanine exchange factor that acts as an activator of ARF1 at the trans-Golgi network and is thus involved in vesicular budding and traffic between compartments of the Golgi apparatus. Activation of Arf (ADP-ribosylation factor) GTPases is essential for vesicle formation via recruitment of cargo adapters and coat proteins necessary for Golgi trafficking. Also plays an essential role in ER-to-Golgi traffic. SEC7 also acts as an effector of two Rab GTPases, YPT1 and YPT31/32. The sequence is that of ADP-ribosylation factor guanine nucleotide-exchange factor SEC7 from Saccharomyces cerevisiae (strain ATCC 204508 / S288c) (Baker's yeast).